The primary structure comprises 294 residues: Diphthine synthase (294 aa).

S-adenosyl-L-methionine is bound by residues D93, V96, 121–122, L173, and A220; that span reads SG.

This sequence belongs to the diphthine synthase family. In terms of assembly, homodimer.

The enzyme catalyses 2-[(3S)-amino-3-carboxypropyl]-L-histidyl-[translation elongation factor 2] + 3 S-adenosyl-L-methionine = diphthine-[translation elongation factor 2] + 3 S-adenosyl-L-homocysteine + 3 H(+). The protein operates within protein modification; peptidyl-diphthamide biosynthesis. S-adenosyl-L-methionine-dependent methyltransferase that catalyzes the trimethylation of the amino group of the modified target histidine residue in translation elongation factor 2 (EF-2), to form an intermediate called diphthine. The three successive methylation reactions represent the second step of diphthamide biosynthesis. The protein is Diphthine synthase (dphB) of Aeropyrum pernix (strain ATCC 700893 / DSM 11879 / JCM 9820 / NBRC 100138 / K1).